Here is a 172-residue protein sequence, read N- to C-terminus: Shikimate kinase (172 aa).

11-16 is an ATP binding site; the sequence is GAGKST. Position 15 (Ser-15) interacts with Mg(2+). Substrate-binding residues include Asp-33, Arg-57, and Gly-79. Residue Arg-117 participates in ATP binding. Arg-136 contacts substrate. ATP is bound at residue Arg-153.

The protein belongs to the shikimate kinase family. As to quaternary structure, monomer. Mg(2+) serves as cofactor.

It localises to the cytoplasm. The catalysed reaction is shikimate + ATP = 3-phosphoshikimate + ADP + H(+). It functions in the pathway metabolic intermediate biosynthesis; chorismate biosynthesis; chorismate from D-erythrose 4-phosphate and phosphoenolpyruvate: step 5/7. In terms of biological role, catalyzes the specific phosphorylation of the 3-hydroxyl group of shikimic acid using ATP as a cosubstrate. The chain is Shikimate kinase from Pseudomonas entomophila (strain L48).